The sequence spans 81 residues: Carboxysome shell vertex protein CsoS4B (81 aa).

In terms of domain architecture, BMV spans M1–D77.

This sequence belongs to the CcmL/EutN family. CsoS4 subfamily. As to quaternary structure, homopentamer.

The protein localises to the carboxysome. In terms of biological role, probably forms vertices in the carboxysome. Has been modeled to induce curvature upon insertion into an otherwise flat hexagonal layer of major carboxysome subunits. A minor shell protein, only 12 pentamers of CsoS4A/CsoS4B are calculated to be present in each carboxysome. The 2 CsoS4 proteins contribute to the impermeability of the carboxysome to CO(2). Its central pore is probably too small to allow passage of metabolites; its function might be to anchor different proteins or metabolites to the carboxysome. Unlike beta-carboxysomes, alpha-carboxysomes (Cb) can form without cargo protein. CsoS2 is essential for Cb formation and is also capable of targeting foreign proteins to the Cb. The Cb shell assembles with the aid of CsoS2; CsoS1A, CsoS1B and CsoS1C form the majority of the shell while CsoS4A and CsoS4B form vertices. CsoS1D forms pseudohexamers that probably control metabolite flux into and out of the shell. In Halothiobacillus neapolitanus (strain ATCC 23641 / c2) (Thiobacillus neapolitanus), this protein is Carboxysome shell vertex protein CsoS4B.